Here is a 316-residue protein sequence, read N- to C-terminus: Aspartate carbamoyltransferase catalytic subunit (316 aa).

Residues Arg56 and Thr57 each coordinate carbamoyl phosphate. L-aspartate is bound at residue Lys84. Carbamoyl phosphate is bound by residues Arg106, His139, and Gln142. L-aspartate contacts are provided by Arg172 and Arg226. Carbamoyl phosphate is bound by residues Gly267 and Pro268.

The protein belongs to the aspartate/ornithine carbamoyltransferase superfamily. ATCase family. As to quaternary structure, heterododecamer (2C3:3R2) of six catalytic PyrB chains organized as two trimers (C3), and six regulatory PyrI chains organized as three dimers (R2).

The catalysed reaction is carbamoyl phosphate + L-aspartate = N-carbamoyl-L-aspartate + phosphate + H(+). Its pathway is pyrimidine metabolism; UMP biosynthesis via de novo pathway; (S)-dihydroorotate from bicarbonate: step 2/3. Catalyzes the condensation of carbamoyl phosphate and aspartate to form carbamoyl aspartate and inorganic phosphate, the committed step in the de novo pyrimidine nucleotide biosynthesis pathway. This Mycobacterium sp. (strain JLS) protein is Aspartate carbamoyltransferase catalytic subunit.